A 106-amino-acid polypeptide reads, in one-letter code: Large ribosomal subunit protein bL21 (106 aa).

This sequence belongs to the bacterial ribosomal protein bL21 family. Part of the 50S ribosomal subunit. Contacts protein L20.

Its function is as follows. This protein binds to 23S rRNA in the presence of protein L20. The sequence is that of Large ribosomal subunit protein bL21 from Chlamydia caviae (strain ATCC VR-813 / DSM 19441 / 03DC25 / GPIC) (Chlamydophila caviae).